The primary structure comprises 527 residues: BTB/POZ domain-containing protein At4g01160 (527 aa).

Positions 111–180 (NNNTSVLSVQ…MYSNSLSVTA (70 aa)) constitute a BTB domain. In terms of domain architecture, BACK spans 233–327 (VKPLTNAARQ…HMTTDRLKKI (95 aa)).

Its pathway is protein modification; protein ubiquitination. Its function is as follows. May act as a substrate-specific adapter of an E3 ubiquitin-protein ligase complex (CUL3-RBX1-BTB) which mediates the ubiquitination and subsequent proteasomal degradation of target proteins. This Arabidopsis thaliana (Mouse-ear cress) protein is BTB/POZ domain-containing protein At4g01160.